The chain runs to 282 residues: NAD(P)H-hydrate epimerase (282 aa).

The N-terminal 53 residues, 1 to 53, are a transit peptide targeting the mitochondrion; it reads MSGLRTLLGLGLLVAGSRLPRVISQQSVCRARPIWWGTQRRGSETMAGAAVKY. The residue at position 43 (serine 43) is a Phosphoserine; by PKA. In terms of domain architecture, YjeF N-terminal spans 59–269; the sequence is AQAVDQELFN…ALEKKYQLNL (211 aa). (6S)-NADPHX is bound at residue 113 to 117; the sequence is NNGGD. Asparagine 114 lines the K(+) pocket. Lysine 138 is modified (N6-succinyllysine). Residue aspartate 179 participates in K(+) binding. (6S)-NADPHX is bound by residues 183–189 and aspartate 212; that span reads GFSFKGD. Residue serine 215 coordinates K(+).

This sequence belongs to the NnrE/AIBP family. Homodimer. Interacts with APOA1 and APOA2. The cofactor is K(+). Undergoes physiological phosphorylation during sperm capacitation, downstream to PKA activation. Detected in testis and sperm (at protein level). Expressed at high levels in heart, liver, kidney, and testis.

Its subcellular location is the mitochondrion. It is found in the secreted. The catalysed reaction is (6R)-NADHX = (6S)-NADHX. The enzyme catalyses (6R)-NADPHX = (6S)-NADPHX. Its function is as follows. Catalyzes the epimerization of the S- and R-forms of NAD(P)HX, a damaged form of NAD(P)H that is a result of enzymatic or heat-dependent hydration. This is a prerequisite for the S-specific NAD(P)H-hydrate dehydratase to allow the repair of both epimers of NAD(P)HX. Accelerates cholesterol efflux from endothelial cells to high-density lipoprotein (HDL) and thereby regulates angiogenesis. In Mus musculus (Mouse), this protein is NAD(P)H-hydrate epimerase.